A 47-amino-acid chain; its full sequence is MAKGKRTFQPNNRRRARVHGFRLRMRTRAGRAIVTGRRRKGRRSLTA.

Belongs to the bacterial ribosomal protein bL34 family.

The chain is Large ribosomal subunit protein bL34 from Mycobacterium sp. (strain JLS).